A 277-amino-acid polypeptide reads, in one-letter code: Small ribosomal subunit protein uS2 (277 aa).

Residues 226-277 are disordered; the sequence is GQQARADRGEDLGAAVEPVAEPALVEEAAAPVTEDEQVPAEAAAETERQSDA. The segment covering 239–257 has biased composition (low complexity); sequence AAVEPVAEPALVEEAAAPV.

The protein belongs to the universal ribosomal protein uS2 family.

The polypeptide is Small ribosomal subunit protein uS2 (Sphingopyxis alaskensis (strain DSM 13593 / LMG 18877 / RB2256) (Sphingomonas alaskensis)).